A 1024-amino-acid chain; its full sequence is NLR family CARD domain-containing protein 4 (1024 aa).

One can recognise a CARD domain in the interval Met-1–Ser-88. The tract at residues Glu-95 to Gly-298 is nucleotide-binding domain (NBD). Residues Ser-163–Lys-476 form the NACHT domain. ATP is bound at residue Gly-169–Ser-176. The tract at residues Ser-356–Glu-463 is winged-helix domain (WHD). The residue at position 533 (Ser-533) is a Phosphoserine. LRR repeat units lie at residues Phe-578–Phe-598, Lys-656–Tyr-679, Val-735–Ser-758, Leu-762–Glu-785, Leu-787–Val-812, Glu-824–Leu-847, Val-848–Glu-870, Leu-878–His-902, Lys-911–Lys-933, Leu-936–Asn-963, Lys-965–Arg-985, and Glu-999–Leu-1021.

Homooligomer; homooligomerizes to induce formation of the NLRC4 inflammasome. Homooligomerizes following activation by pathogenic proteins. Component of the NLRC4 inflammasome, at least composed of NLRC4 and caspase-1 (CASP1). Some NLRC4 inflammasomes contain PYCARD/ASC, while some others directly contact and activate CASP1. Interacts (via CARD domain) with PYCARD/ASC, pro-caspase-1 (CASP1), NOD2, BCL10 and NALP1 (NAC) by CARD-CARD interaction. Interacts with EIF2AK2/PKR. Post-translationally, phosphorylated at Ser-533 following infection of macrophages with S.typhimurium (Salmonella). Phosphorylation is essential for NLRC4 inflammasome function to promote caspase-1 activation and pyroptosis. PRKCD phosphorylates Ser-533 in vitro. In terms of tissue distribution, isoform 2 is expressed ubiquitously, although highly expressed in lung and spleen. Isoform 1 is highly expressed in lung, followed by leukocytes especially monocytes, lymph node, colon, brain, prostate, placenta, spleen, bone marrow and fetal liver. Isoform 4 is only detected in brain.

Its subcellular location is the cytoplasm. The protein resides in the cytosol. The protein localises to the inflammasome. In terms of biological role, key component of inflammasomes that indirectly senses specific proteins from pathogenic bacteria and fungi and responds by assembling an inflammasome complex that promotes caspase-1 activation, cytokine production and macrophage pyroptosis. The NLRC4 inflammasome is activated as part of the innate immune response to a range of intracellular bacteria. This chain is NLR family CARD domain-containing protein 4 (NLRC4), found in Homo sapiens (Human).